The chain runs to 29 residues: HSQGTFTSDYSKYLDSRRAQDFVQWLMNT.

Ser-2 is modified (phosphoserine).

It belongs to the glucagon family.

Its subcellular location is the secreted. Functionally, glucagon plays a key role in glucose metabolism and homeostasis. Regulates blood glucose by increasing gluconeogenesis and decreasing glycolysis. The sequence is that of Glucagon (GCG) from Oryctolagus cuniculus (Rabbit).